The sequence spans 195 residues: Orotate phosphoribosyltransferase (195 aa).

5-phospho-alpha-D-ribose 1-diphosphate-binding positions include Arg86, Lys90, His92, and 111–119; that span reads DDVATTGVS. 2 residues coordinate orotate: Thr115 and Arg143.

This sequence belongs to the purine/pyrimidine phosphoribosyltransferase family. PyrE subfamily. As to quaternary structure, homodimer. It depends on Mg(2+) as a cofactor.

It carries out the reaction orotidine 5'-phosphate + diphosphate = orotate + 5-phospho-alpha-D-ribose 1-diphosphate. It participates in pyrimidine metabolism; UMP biosynthesis via de novo pathway; UMP from orotate: step 1/2. Catalyzes the transfer of a ribosyl phosphate group from 5-phosphoribose 1-diphosphate to orotate, leading to the formation of orotidine monophosphate (OMP). This chain is Orotate phosphoribosyltransferase, found in Saccharolobus solfataricus (strain ATCC 35092 / DSM 1617 / JCM 11322 / P2) (Sulfolobus solfataricus).